Reading from the N-terminus, the 1268-residue chain is MEAVKTFNSELYSLNDYKPPISKAKMTQITKAAIKAIKFYKHVVQSVEKFIQKCKPEYKVPGLYVIDSIVRQSRHQFGQEKDVFAPRFSNNIISTFQNLYRCPGDDKSKIVRVLNLWQKNNVFKSEIIQPLLDMAAGIPPPVVTPVLASTTAAMSNTPGTPVTPVTPANVVQGLPDPWVSQIANTDTLAAVAQILQSPQGQQLQQLIQTLQIQQQKPQPSILQALDAGLVVQLQALTAQLTAAAAAANTLTPLDQGVSFNKKLMDRFDFGEDSEHSEESKKEMPTPQLSHVSESVNNSIFHQIAEQLQQQNLEQLRQQLLEQQQPQKVTPQDSQEGTFGSEHSASPSQGSSQQHFLEPEANLDDSIDIQQQDMDIDEGQDVVEEEIFEPEAKKVAVRSRSRTHSRSRSRSPRKRRSRSRSGSRKRKHRKRSRSHSREKKRKASRSYSSERRAREREKERQKKGLPPVRSKTLSVCSTTLWVGQVDKKATQQDLTNLFEEFGQIESINMIPPRGCAYVCMVHRQDSFRALQKLSSGSYKIGSKVIKIAWALNKGVKTEYKQFWDVDLGVTYIPWEKVKVDDLDGFAEGGMIDQETVNAEWETVKASEPVKEPVQTAQSPAPVEKESVVTTQAEVFPPPVAMLQIPVAPAVPAVSLVPPAFPVSMPVPPPGFNPIPPPPFLRASFNPSQPPPGFMPPPVPPPVVPPPAIPPVVPTSLVQPPLSMTPEAVKDVGFGSLVLPSGSVAGSLAPSTLPAGNVFNPPSKAEPEEKVPHLIEHQIPSGENTRPVIPSDIPSSAAMLAQPPGASSTSGILCVQRPNVSSNSEILGVRPANVSNSAAIMGAQPPNILNNSGILAIQPPNVSSGSGLLGVLPPNLPNNSGLVGLQPPNVTSPAGLLGTQPPIGPQNLPPLAIPAQRMPALPMLDIRPGLIAQAPGPRFPLLQPGIPPQRGIPPPSVLDAALHPPPRGPFPPGDLFSQPERPFLAPGRPSIDNVPNPDKRIPLGNDNIQQEGDRDYRFPPIETREGITRPPQVDVRDVVGRRLDPREGPGRPPLDARDHFGRPPVDMRENLVRPSLDHLGRRDHFGFPPEKPWGPRDFDEREHRVLPVFGGPKGLHEERGRFRAGNYRFDPRSGPWNRGFGQEVHRDFDDRRRPWERQRDRDDRDFDFCREINGNRLGRDRIQNTWVPPPHARVFDYFEGATSQRKGDNVPQVNGENTERHAQPPPLPVQKDPELYEKLASSGDVDKEESGTVAGVESEAVVESTETEGT.

Positions 1-139 constitute a CID domain; that stretch reads MEAVKTFNSE…PLLDMAAGIP (139 aa). A Phosphothreonine modification is found at T6. K18 participates in a covalent cross-link: Glycyl lysine isopeptide (Lys-Gly) (interchain with G-Cter in SUMO1). Residues 270–283 show a composition bias toward basic and acidic residues; that stretch reads GEDSEHSEESKKEM. 3 disordered regions span residues 270-290, 322-355, and 385-469; these read GEDS…QLSH, QQQP…QQHF, and EIFE…PVRS. S273 is modified (phosphoserine). Polar residues predominate over residues 327 to 354; it reads KVTPQDSQEGTFGSEHSASPSQGSSQQH. The span at 394 to 443 shows a compositional bias: basic residues; it reads VAVRSRSRTHSRSRSRSPRKRRSRSRSGSRKRKHRKRSRSHSREKKRKAS. Residues 447–461 show a composition bias toward basic and acidic residues; it reads SSERRAREREKERQK. One can recognise an RRM domain in the interval 477–551; the sequence is TTLWVGQVDK…KVIKIAWALN (75 aa). S617 carries the post-translational modification Phosphoserine. The disordered stretch occupies residues 776–807; that stretch reads QIPSGENTRPVIPSDIPSSAAMLAQPPGASST. 3 positions are modified to asymmetric dimethylarginine: R915, R925, and R936. 2 disordered regions span residues 984–1012 and 1040–1065; these read PGRP…EGDR and RLDP…PVDM. R1071 carries the post-translational modification Asymmetric dimethylarginine. The interval 1199–1268 is disordered; that stretch reads ATSQRKGDNV…VVESTETEGT (70 aa). The span at 1249 to 1262 shows a compositional bias: low complexity; it reads GTVAGVESEAVVES.

In terms of assembly, interacts with POLR2A; via C-terminal heptapeptide repeat domain (CTD) phosphorylated at 'Ser-2' and 'Ser-5'. Identified in a complex with CDC5L and other spliceosomal proteins.

It is found in the nucleus. Its subcellular location is the nucleus matrix. Its function is as follows. Anti-terminator protein required to prevent early mRNA termination during transcription. Together with SCAF4, acts by suppressing the use of early, alternative poly(A) sites, thereby preventing the accumulation of non-functional truncated proteins. Mechanistically, associates with the phosphorylated C-terminal heptapeptide repeat domain (CTD) of the largest RNA polymerase II subunit (POLR2A), and subsequently binds nascent RNA upstream of early polyadenylation sites to prevent premature mRNA transcript cleavage and polyadenylation. Independently of SCAF4, also acts as a positive regulator of transcript elongation. This Mus musculus (Mouse) protein is SR-related and CTD-associated factor 8.